The following is a 944-amino-acid chain: Leucine--tRNA ligase (944 aa).

The short motif at P40–H51 is the 'HIGH' region element. The short motif at K718 to S722 is the 'KMSKS' region element. K721 contributes to the ATP binding site.

This sequence belongs to the class-I aminoacyl-tRNA synthetase family.

The protein localises to the cytoplasm. It catalyses the reaction tRNA(Leu) + L-leucine + ATP = L-leucyl-tRNA(Leu) + AMP + diphosphate. This Phocaeicola vulgatus (strain ATCC 8482 / DSM 1447 / JCM 5826 / CCUG 4940 / NBRC 14291 / NCTC 11154) (Bacteroides vulgatus) protein is Leucine--tRNA ligase.